A 427-amino-acid chain; its full sequence is Probable transcription factor At5g28040 (427 aa).

Positions 1 to 81 (MASDQRDTDF…APATKSSSGT (81 aa)) are disordered. Residue Ser14 is modified to Phosphoserine. Residues 22–32 (GGGGGGRGGGE) show a composition bias toward gly residues. Residues 33–62 (TESDEDVVIPEPNEAEDDDHDPDPDPEYED) show a composition bias toward acidic residues.

The protein belongs to the GeBP family.

This Arabidopsis thaliana (Mouse-ear cress) protein is Probable transcription factor At5g28040.